The sequence spans 828 residues: Periplasmic nitrate reductase (828 aa).

A signal peptide (tat-type signal) is located at residues 1-31; sequence MKLSRRSFMKANAVAAAAAAAGLSVPGVARA. The 4Fe-4S Mo/W bis-MGD-type domain maps to 39-95; sequence IKWDKAPCRFCGTGCGVLVGTQQGRVVACQGDPDAPVNRGLNCIKGYFLPKIMYGKD. [4Fe-4S] cluster-binding residues include C46, C49, C53, and C81. Residues K83, Q150, N175, C179, 212-219, 243-247, 262-264, M372, Q376, N482, 508-509, K531, D558, and 718-727 each bind Mo-bis(molybdopterin guanine dinucleotide); these read WGANMAEM, STYQH, QSD, SD, and TGRVLEHWHT. F794 contacts substrate. 2 residues coordinate Mo-bis(molybdopterin guanine dinucleotide): N802 and K819.

The protein belongs to the prokaryotic molybdopterin-containing oxidoreductase family. NasA/NapA/NarB subfamily. In terms of assembly, component of the periplasmic nitrate reductase NapAB complex composed of NapA and NapB. [4Fe-4S] cluster serves as cofactor. The cofactor is Mo-bis(molybdopterin guanine dinucleotide). Predicted to be exported by the Tat system. The position of the signal peptide cleavage has not been experimentally proven.

It is found in the periplasm. It catalyses the reaction 2 Fe(II)-[cytochrome] + nitrate + 2 H(+) = 2 Fe(III)-[cytochrome] + nitrite + H2O. Its function is as follows. Catalytic subunit of the periplasmic nitrate reductase complex NapAB. Receives electrons from NapB and catalyzes the reduction of nitrate to nitrite. The chain is Periplasmic nitrate reductase from Shigella flexneri serotype 5b (strain 8401).